Reading from the N-terminus, the 156-residue chain is Cyclic pyranopterin monophosphate synthase (156 aa).

Residues 73 to 75 and 110 to 111 contribute to the substrate site; these read LCH and ME. The active site involves Asp-125.

It belongs to the MoaC family. In terms of assembly, homohexamer; trimer of dimers.

It carries out the reaction (8S)-3',8-cyclo-7,8-dihydroguanosine 5'-triphosphate = cyclic pyranopterin phosphate + diphosphate. It functions in the pathway cofactor biosynthesis; molybdopterin biosynthesis. Its function is as follows. Catalyzes the conversion of (8S)-3',8-cyclo-7,8-dihydroguanosine 5'-triphosphate to cyclic pyranopterin monophosphate (cPMP). The sequence is that of Cyclic pyranopterin monophosphate synthase from Pseudomonas putida (strain W619).